Consider the following 57-residue polypeptide: UPF0391 membrane protein azo1765 (57 aa).

Helical transmembrane passes span 1–21 and 33–53; these read MIKWAIIFFIISLVAGLFGFT and VLFFIALAIFLIVLIFGVGLG.

This sequence belongs to the UPF0391 family.

It localises to the cell membrane. The polypeptide is UPF0391 membrane protein azo1765 (Azoarcus sp. (strain BH72)).